The primary structure comprises 142 residues: Deoxyuridine 5'-triphosphate nucleotidohydrolase (142 aa).

Substrate-binding positions include 62–64 (RSG), Asn75, and 79–81 (TID).

This sequence belongs to the dUTPase family. Mg(2+) is required as a cofactor.

The enzyme catalyses dUTP + H2O = dUMP + diphosphate + H(+). It functions in the pathway pyrimidine metabolism; dUMP biosynthesis; dUMP from dCTP (dUTP route): step 2/2. Functionally, this enzyme is involved in nucleotide metabolism: it produces dUMP, the immediate precursor of thymidine nucleotides and it decreases the intracellular concentration of dUTP so that uracil cannot be incorporated into DNA. In Trichodesmium erythraeum (strain IMS101), this protein is Deoxyuridine 5'-triphosphate nucleotidohydrolase.